The following is a 691-amino-acid chain: DNA ligase (691 aa).

NAD(+) contacts are provided by residues 41–45 (DAEYD), 90–91 (SL), and glutamate 130. Lysine 132 serves as the catalytic N6-AMP-lysine intermediate. Residues arginine 153, glutamate 190, lysine 307, and lysine 331 each contribute to the NAD(+) site. Residues cysteine 425, cysteine 428, cysteine 443, and cysteine 449 each coordinate Zn(2+). Positions 610–691 (APQGVLAGKT…LHQLLEGNTP (82 aa)) constitute a BRCT domain.

This sequence belongs to the NAD-dependent DNA ligase family. LigA subfamily. Requires Mg(2+) as cofactor. It depends on Mn(2+) as a cofactor.

It catalyses the reaction NAD(+) + (deoxyribonucleotide)n-3'-hydroxyl + 5'-phospho-(deoxyribonucleotide)m = (deoxyribonucleotide)n+m + AMP + beta-nicotinamide D-nucleotide.. DNA ligase that catalyzes the formation of phosphodiester linkages between 5'-phosphoryl and 3'-hydroxyl groups in double-stranded DNA using NAD as a coenzyme and as the energy source for the reaction. It is essential for DNA replication and repair of damaged DNA. The polypeptide is DNA ligase (Burkholderia cenocepacia (strain ATCC BAA-245 / DSM 16553 / LMG 16656 / NCTC 13227 / J2315 / CF5610) (Burkholderia cepacia (strain J2315))).